The following is an 877-amino-acid chain: Leucine--tRNA ligase (877 aa).

The 'HIGH' region signature appears at 50–60 (PYPSGKLHMGH). The 'KMSKS' region motif lies at 634–638 (KMSKS). Residue Lys637 coordinates ATP.

It belongs to the class-I aminoacyl-tRNA synthetase family.

It localises to the cytoplasm. It carries out the reaction tRNA(Leu) + L-leucine + ATP = L-leucyl-tRNA(Leu) + AMP + diphosphate. In Hydrogenovibrio crunogenus (strain DSM 25203 / XCL-2) (Thiomicrospira crunogena), this protein is Leucine--tRNA ligase.